Reading from the N-terminus, the 363-residue chain is Protein CPn_1058/CP_0792/CPj1058/CpB1100 (363 aa).

Residues methionine 1–alanine 27 form the signal peptide.

The protein belongs to the chlamydial CPn_1058/CT_355/TC_0634 family.

The sequence is that of Protein CPn_1058/CP_0792/CPj1058/CpB1100 from Chlamydia pneumoniae (Chlamydophila pneumoniae).